The chain runs to 285 residues: Nucleotide-binding protein Pfl01_0854 (285 aa).

8–15 (GRSGSGKS) is a binding site for ATP. 60–63 (DARN) is a GTP binding site.

The protein belongs to the RapZ-like family.

Its function is as follows. Displays ATPase and GTPase activities. The sequence is that of Nucleotide-binding protein Pfl01_0854 from Pseudomonas fluorescens (strain Pf0-1).